A 302-amino-acid polypeptide reads, in one-letter code: Sulfate adenylyltransferase subunit 2 (302 aa).

A disordered region spans residues 280–302 (RQGRLIDSDQSASMEQKKRQGYF).

It belongs to the PAPS reductase family. CysD subfamily. Heterodimer composed of CysD, the smaller subunit, and CysN.

It catalyses the reaction sulfate + ATP + H(+) = adenosine 5'-phosphosulfate + diphosphate. It functions in the pathway sulfur metabolism; hydrogen sulfide biosynthesis; sulfite from sulfate: step 1/3. With CysN forms the ATP sulfurylase (ATPS) that catalyzes the adenylation of sulfate producing adenosine 5'-phosphosulfate (APS) and diphosphate, the first enzymatic step in sulfur assimilation pathway. APS synthesis involves the formation of a high-energy phosphoric-sulfuric acid anhydride bond driven by GTP hydrolysis by CysN coupled to ATP hydrolysis by CysD. This chain is Sulfate adenylyltransferase subunit 2, found in Shewanella baltica (strain OS185).